Consider the following 91-residue polypeptide: PqqA binding protein (91 aa).

This sequence belongs to the PqqD family. In terms of assembly, monomer. Interacts with PqqE.

It functions in the pathway cofactor biosynthesis; pyrroloquinoline quinone biosynthesis. In terms of biological role, functions as a PqqA binding protein and presents PqqA to PqqE, in the pyrroloquinoline quinone (PQQ) biosynthetic pathway. The chain is PqqA binding protein from Pseudomonas entomophila (strain L48).